A 533-amino-acid chain; its full sequence is Glucose-6-phosphate isomerase (533 aa).

The active-site Proton donor is glutamate 322. Active-site residues include histidine 351 and lysine 455.

It belongs to the GPI family.

It localises to the cytoplasm. It catalyses the reaction alpha-D-glucose 6-phosphate = beta-D-fructose 6-phosphate. It functions in the pathway carbohydrate biosynthesis; gluconeogenesis. Its pathway is carbohydrate degradation; glycolysis; D-glyceraldehyde 3-phosphate and glycerone phosphate from D-glucose: step 2/4. Catalyzes the reversible isomerization of glucose-6-phosphate to fructose-6-phosphate. This is Glucose-6-phosphate isomerase from Desulfitobacterium hafniense (strain DSM 10664 / DCB-2).